Here is a 140-residue protein sequence, read N- to C-terminus: Putative pre-16S rRNA nuclease (140 aa).

It belongs to the YqgF nuclease family.

The protein localises to the cytoplasm. In terms of biological role, could be a nuclease involved in processing of the 5'-end of pre-16S rRNA. This is Putative pre-16S rRNA nuclease from Pasteurella multocida (strain Pm70).